We begin with the raw amino-acid sequence, 336 residues long: Torsin-1B (336 aa).

Residues 1-24 (MLRAGWLRGAAALALLLAARVVAA) form the signal peptide. A glycan (N-linked (GlcNAc...) asparagine) is linked at Asn-64. 109–116 (GWAGTGKN) lines the ATP pocket. N-linked (GlcNAc...) asparagine glycosylation is present at Asn-165.

This sequence belongs to the ClpA/ClpB family. Torsin subfamily. As to quaternary structure, homohexamer. Interacts with TOR1A; the interaction may be specific of neural tissues. Interacts with TOR1AIP1; TOR1AIP1 is required for TOR1B location on the nuclear membrane. Interacts (ATP-bound) with TOR1AIP2; important for endoplasmic reticulum integrity. Post-translationally, N-glycosylated. In terms of tissue distribution, widely expressed with low levels in brain.

The protein resides in the endoplasmic reticulum lumen. It is found in the nucleus membrane. The enzyme catalyses ATP + H2O = ADP + phosphate + H(+). May serve as a molecular chaperone assisting in the proper folding of secreted and/or membrane proteins. Plays a role in non-neural cells nuclear envelope and endoplasmic reticulum integrity. May have a redundant function with TOR1A in non-neural tissues. The chain is Torsin-1B (TOR1B) from Homo sapiens (Human).